The following is a 127-amino-acid chain: Large ribosomal subunit protein bL19 (127 aa).

This sequence belongs to the bacterial ribosomal protein bL19 family.

Functionally, this protein is located at the 30S-50S ribosomal subunit interface and may play a role in the structure and function of the aminoacyl-tRNA binding site. This Ruegeria pomeroyi (strain ATCC 700808 / DSM 15171 / DSS-3) (Silicibacter pomeroyi) protein is Large ribosomal subunit protein bL19.